Consider the following 259-residue polypeptide: MTTETAEKVEYIIETKDVDLFYGSKQALQKIALNIKKNQVTALIGPSGCGKSTFLRTLNRMNDLIPNVKTTGEIHIGGENVQDPKIDMVNLRKKVGMVFQQANPFPFSIYDNVAYGPRMHGIKDKKVLDEIVERSLRQAALWEEVHDRLDRSAIGMSGGQQQRLCIARVLAVKPDVILMDEPTSALDPISTAKVEDLILELKKDYTIVIVTHNMQQASRISDETAFFLNGRIVEFADTTSIFTNPAEKETEDYISGRFG.

An ABC transporter domain is found at 13 to 254; sequence IETKDVDLFY…PAEKETEDYI (242 aa). 45-52 contacts ATP; it reads GPSGCGKS.

This sequence belongs to the ABC transporter superfamily. Phosphate importer (TC 3.A.1.7) family. The complex is composed of two ATP-binding proteins (PstB), two transmembrane proteins (PstC and PstA) and a solute-binding protein (PstS).

It localises to the cell membrane. The catalysed reaction is phosphate(out) + ATP + H2O = ADP + 2 phosphate(in) + H(+). Its function is as follows. Part of the ABC transporter complex PstSACB involved in phosphate import. Responsible for energy coupling to the transport system. The chain is Phosphate import ATP-binding protein PstB 1 from Listeria innocua serovar 6a (strain ATCC BAA-680 / CLIP 11262).